The sequence spans 147 residues: Globin (147 aa).

The 146-residue stretch at Ser2–Gln147 folds into the Globin domain. Positions 64 and 95 each coordinate heme b.

It belongs to the globin family. In terms of assembly, homodimer or homooligomer.

The polypeptide is Globin (Aequiyoldia eightsii (Antarctic yoldia)).